We begin with the raw amino-acid sequence, 299 residues long: Biotin transporter (299 aa).

The next 10 helical transmembrane spans lie at 2 to 22 (ALLIITTILWAFSFSLFGEYL), 26 to 46 (VDSYFAVLIRVGLAALVFLPF), 56 to 76 (TISLYMLVGAMQLGIMYMLSF), 81 to 101 (YLTVSELLLFTVLTPLYITLI), 110 to 130 (LRWGYAFSALLAVIGAGIIRY), 137 to 157 (FWVGLLLVQLSNISFAIGMVG), 172 to 192 (AFAWFYLGAFLVAAVAWSLLG), 202 to 222 (LQWSILVFLGVVASGIGYFMW), 233 to 253 (TLGIMNNMHVPAGLLVNLAIW), and 256 to 276 (QPHWPSFITGAAVILASLWVH). EamA domains follow at residues 3–128 (LLII…AGII) and 139–274 (VGLL…ASLW).

Belongs to the drug/metabolite transporter (DMT) superfamily. 10 TMS drug/metabolite exporter (DME) (TC 2.A.7.3) family.

Its subcellular location is the cell inner membrane. It catalyses the reaction biotin(in) = biotin(out). In terms of biological role, uptake of biotin. The polypeptide is Biotin transporter (Salmonella typhi).